The primary structure comprises 245 residues: Gem-associated protein 2 (245 aa).

Belongs to the gemin-2 family. As to quaternary structure, component of the core survival motor neuron (SMN) complex composed of Smn, Gem2, Gem3, rig/Gem5 and one of 3 almost identical Gem4 paralogs encoded by Glos/Gem4a, Gem4b or Gem4c. Part of a minimal SMN complex composed of Smn and Gem2 only; this complex is active in UsnRNP assembly. The SMN complex associates with the entire set of spliceosomal snRNP Sm proteins, SmB, SmD1, SmD2, SmD3, SmE, SmF and SmG, and with the snRNP-specific proteins snRNP-U1-70K, U2A, snf/U1A and U5-116KD. Expressed in nurse cells and oocytes.

The protein localises to the cytoplasm. It localises to the U-body. Component of the survival motor neuron (SMN) complex that catalyzes the assembly of small nuclear ribonucleoproteins (snRNPs), the building blocks of the spliceosome, and thereby plays an important role in the splicing of cellular pre-mRNAs. Most spliceosomal snRNPs contain a common set of Sm proteins SNRPB, SNRPD1, SNRPD2, SNRPD3, SNRPE, SNRPF and SNRPG that assemble in a heptameric protein ring on the Sm site of the small nuclear RNA to form the core snRNP (Sm core). In the cytosol, the Sm proteins SNRPD1, SNRPD2, SNRPE, SNRPF and SNRPG (5Sm) are trapped in an inactive 6S pICln-Sm complex by the chaperone CLNS1A that controls the assembly of the core snRNP. To assemble core snRNPs, the SMN complex accepts the trapped 5Sm proteins from CLNS1A. Binding of snRNA inside 5Sm ultimately triggers eviction of the SMN complex, thereby allowing binding of SNRPD3 and SNRPB to complete assembly of the core snRNP. Within the SMN complex, GEMIN2 constrains the conformation of 5Sm, thereby promoting 5Sm binding to snRNA containing the snRNP code (a nonameric Sm site and a 3'-adjacent stem-loop), thus preventing progression of assembly until a cognate substrate is bound. Involved in adult motor function. The protein is Gem-associated protein 2 of Drosophila melanogaster (Fruit fly).